The sequence spans 281 residues: Acetyl-coenzyme A carboxylase carboxyl transferase subunit beta (281 aa).

One can recognise a CoA carboxyltransferase N-terminal domain in the interval 23 to 281 (IWTKCGSCQA…SLLVKLHYKN (259 aa)). 4 residues coordinate Zn(2+): cysteine 27, cysteine 30, cysteine 46, and cysteine 49. The C4-type zinc-finger motif lies at 27–49 (CGSCQAVLYKSELEKLQEVCPKC).

The protein belongs to the AccD/PCCB family. As to quaternary structure, acetyl-CoA carboxylase is a heterohexamer composed of biotin carboxyl carrier protein (AccB), biotin carboxylase (AccC) and two subunits each of ACCase subunit alpha (AccA) and ACCase subunit beta (AccD). Zn(2+) is required as a cofactor.

It localises to the cytoplasm. The catalysed reaction is N(6)-carboxybiotinyl-L-lysyl-[protein] + acetyl-CoA = N(6)-biotinyl-L-lysyl-[protein] + malonyl-CoA. The protein operates within lipid metabolism; malonyl-CoA biosynthesis; malonyl-CoA from acetyl-CoA: step 1/1. Component of the acetyl coenzyme A carboxylase (ACC) complex. Biotin carboxylase (BC) catalyzes the carboxylation of biotin on its carrier protein (BCCP) and then the CO(2) group is transferred by the transcarboxylase to acetyl-CoA to form malonyl-CoA. This chain is Acetyl-coenzyme A carboxylase carboxyl transferase subunit beta, found in Alteromonas mediterranea (strain DSM 17117 / CIP 110805 / LMG 28347 / Deep ecotype).